Here is a 230-residue protein sequence, read N- to C-terminus: Ureidoacrylate amidohydrolase RutB (230 aa).

Aspartate 24 functions as the Proton acceptor in the catalytic mechanism. Lysine 133 is a catalytic residue. The Nucleophile role is filled by cysteine 166.

Belongs to the isochorismatase family. RutB subfamily.

It catalyses the reaction (Z)-3-ureidoacrylate + H2O + H(+) = (Z)-3-aminoacrylate + NH4(+) + CO2. It carries out the reaction (Z)-3-ureidoacrylate + H2O = (Z)-3-aminoacrylate + carbamate + H(+). The catalysed reaction is (Z)-2-methylureidoacrylate + H2O + H(+) = (Z)-2-methylaminoacrylate + NH4(+) + CO2. Its function is as follows. Hydrolyzes ureidoacrylate to form aminoacrylate and carbamate. The carbamate hydrolyzes spontaneously, thereby releasing one of the nitrogen atoms of the pyrimidine ring as ammonia and one of its carbon atoms as CO2. The chain is Ureidoacrylate amidohydrolase RutB from Escherichia coli O157:H7.